The chain runs to 730 residues: Ribosomal RNA large subunit methyltransferase K/L (730 aa).

The region spanning 46 to 157 (TAYRLCVWSR…RGEAILSLDL (112 aa)) is the THUMP domain. Positions 394–418 (GERREAQPEGTEARQQVPQASEPAR) are disordered.

Belongs to the methyltransferase superfamily. RlmKL family.

It is found in the cytoplasm. It carries out the reaction guanosine(2445) in 23S rRNA + S-adenosyl-L-methionine = N(2)-methylguanosine(2445) in 23S rRNA + S-adenosyl-L-homocysteine + H(+). The enzyme catalyses guanosine(2069) in 23S rRNA + S-adenosyl-L-methionine = N(2)-methylguanosine(2069) in 23S rRNA + S-adenosyl-L-homocysteine + H(+). Its function is as follows. Specifically methylates the guanine in position 2445 (m2G2445) and the guanine in position 2069 (m7G2069) of 23S rRNA. The protein is Ribosomal RNA large subunit methyltransferase K/L of Pseudomonas putida (strain ATCC 47054 / DSM 6125 / CFBP 8728 / NCIMB 11950 / KT2440).